A 108-amino-acid polypeptide reads, in one-letter code: UPF0251 protein PF0620 (108 aa).

This sequence belongs to the UPF0251 family.

This is UPF0251 protein PF0620 from Pyrococcus furiosus (strain ATCC 43587 / DSM 3638 / JCM 8422 / Vc1).